The following is a 511-amino-acid chain: ATP synthase subunit alpha, plastid (511 aa).

170–177 lines the ATP pocket; that stretch reads GDRQTGKT.

The protein belongs to the ATPase alpha/beta chains family. As to quaternary structure, F-type ATPases have 2 components, CF(1) - the catalytic core - and CF(0) - the membrane proton channel. CF(1) has five subunits: alpha(3), beta(3), gamma(1), delta(1), epsilon(1). CF(0) has four main subunits: a, b, b' and c.

It is found in the plastid membrane. The enzyme catalyses ATP + H2O + 4 H(+)(in) = ADP + phosphate + 5 H(+)(out). Its function is as follows. Produces ATP from ADP in the presence of a proton gradient across the membrane. The alpha chain is a regulatory subunit. The protein is ATP synthase subunit alpha, plastid of Cuscuta reflexa (Southern Asian dodder).